We begin with the raw amino-acid sequence, 657 residues long: Knob-associated histidine-rich protein (657 aa).

An N-terminal signal peptide occupies residues 1–34 (MKSFKNKNTLRRKKAFPVFTKILLVSFLVWVLKC). Asparagine 42 is a glycosylation site (N-linked (GlcNAc...) asparagine). Residues 57-76 (AQKQHEHHHHHHHHHHHQHQ) show a composition bias toward basic residues. Disordered stretches follow at residues 57–138 (AQKQ…PSNE), 282–301 (AHDG…SEGY), and 352–657 (VNKY…GCCG). Over residues 99-108 (PQVHQQVHGQ) the composition is skewed to low complexity. Positions 112–123 (HHHHHHHHHHLH) are enriched in basic residues. 2 stretches are compositionally biased toward basic and acidic residues: residues 357-378 (KHGD…EGEK) and 399-408 (KDNEDAESVK). The segment covering 409–425 (SKKHKSHDCEKKKSKKH) has biased composition (basic residues). Over residues 426–435 (KDNEDAESVK) the composition is skewed to basic and acidic residues. The segment covering 453–468 (AAKKLTKKIKIKKKTN) has biased composition (basic residues). Basic and acidic residues predominate over residues 473 to 496 (DGSKAHEKKENETKNTAGENKKVD). A compositionally biased stretch (polar residues) spans 497 to 508 (STSADNKSTNAA). Composition is skewed to basic and acidic residues over residues 512-523 (AKDKTQGGKTDK) and 551-578 (STSK…EATK). Positions 590 to 614 (ASTTEGATKGASTTAGSTTGATTGA) are enriched in low complexity. Over residues 628 to 643 (AANNGEQVMSRGQAQL) the composition is skewed to polar residues. A compositionally biased stretch (basic residues) spans 648 to 657 (KKKKKRGCCG).

The protein localises to the secreted. In terms of biological role, KAHRP might mimick human histidine-rich glycoproteins to anchor host thrombospondin or a parasite analog in a binding complex with the endothelial cell receptor. The protein is Knob-associated histidine-rich protein (SD17) of Plasmodium falciparum (isolate NF7 / Ghana).